Consider the following 141-residue polypeptide: Nucleoside diphosphate kinase (141 aa).

The ATP site is built by Lys11, Phe59, Arg87, Thr93, Arg104, and Asn114. His117 functions as the Pros-phosphohistidine intermediate in the catalytic mechanism.

The protein belongs to the NDK family. As to quaternary structure, homotetramer. It depends on Mg(2+) as a cofactor.

Its subcellular location is the cytoplasm. It catalyses the reaction a 2'-deoxyribonucleoside 5'-diphosphate + ATP = a 2'-deoxyribonucleoside 5'-triphosphate + ADP. The enzyme catalyses a ribonucleoside 5'-diphosphate + ATP = a ribonucleoside 5'-triphosphate + ADP. In terms of biological role, major role in the synthesis of nucleoside triphosphates other than ATP. The ATP gamma phosphate is transferred to the NDP beta phosphate via a ping-pong mechanism, using a phosphorylated active-site intermediate. The sequence is that of Nucleoside diphosphate kinase from Polynucleobacter asymbioticus (strain DSM 18221 / CIP 109841 / QLW-P1DMWA-1) (Polynucleobacter necessarius subsp. asymbioticus).